Here is a 191-residue protein sequence, read N- to C-terminus: Dephospho-CoA kinase (191 aa).

A DPCK domain is found at A3–L191. A11–F16 serves as a coordination point for ATP.

The protein belongs to the CoaE family.

The protein localises to the cytoplasm. It carries out the reaction 3'-dephospho-CoA + ATP = ADP + CoA + H(+). It participates in cofactor biosynthesis; coenzyme A biosynthesis; CoA from (R)-pantothenate: step 5/5. Catalyzes the phosphorylation of the 3'-hydroxyl group of dephosphocoenzyme A to form coenzyme A. This chain is Dephospho-CoA kinase, found in Rickettsia felis (strain ATCC VR-1525 / URRWXCal2) (Rickettsia azadi).